The sequence spans 264 residues: GTP cyclohydrolase FolE2 (264 aa).

It belongs to the GTP cyclohydrolase IV family.

The catalysed reaction is GTP + H2O = 7,8-dihydroneopterin 3'-triphosphate + formate + H(+). The protein operates within cofactor biosynthesis; 7,8-dihydroneopterin triphosphate biosynthesis; 7,8-dihydroneopterin triphosphate from GTP: step 1/1. Its function is as follows. Converts GTP to 7,8-dihydroneopterin triphosphate. The chain is GTP cyclohydrolase FolE2 from Vesicomyosocius okutanii subsp. Calyptogena okutanii (strain HA).